The primary structure comprises 131 residues: UPF0102 protein H16_A3579 (131 aa).

It belongs to the UPF0102 family.

The chain is UPF0102 protein H16_A3579 from Cupriavidus necator (strain ATCC 17699 / DSM 428 / KCTC 22496 / NCIMB 10442 / H16 / Stanier 337) (Ralstonia eutropha).